The sequence spans 161 residues: Regulator of ribonuclease activity A (161 aa).

Belongs to the RraA family. As to quaternary structure, homotrimer. Binds to both RNA-binding sites in the C-terminal region of Rne and to RhlB.

Its subcellular location is the cytoplasm. Globally modulates RNA abundance by binding to RNase E (Rne) and regulating its endonucleolytic activity. Can modulate Rne action in a substrate-dependent manner by altering the composition of the degradosome. Modulates RNA-binding and helicase activities of the degradosome. This Shigella boydii serotype 18 (strain CDC 3083-94 / BS512) protein is Regulator of ribonuclease activity A.